A 397-amino-acid chain; its full sequence is Mannonate dehydratase (397 aa).

This sequence belongs to the mannonate dehydratase family. Fe(2+) is required as a cofactor. The cofactor is Mn(2+).

It catalyses the reaction D-mannonate = 2-dehydro-3-deoxy-D-gluconate + H2O. The protein operates within carbohydrate metabolism; pentose and glucuronate interconversion. Catalyzes the dehydration of D-mannonate. The sequence is that of Mannonate dehydratase from Yersinia pseudotuberculosis serotype O:1b (strain IP 31758).